Reading from the N-terminus, the 1859-residue chain is Retinitis pigmentosa 1-like 1 protein (1859 aa).

Disordered stretches follow at residues 1–22 (MNST…PSHR) and 115–154 (RKPP…YSWK). The region spanning 42 to 126 (KKITFLKRGD…PPKTSREPGR (85 aa)) is the Doublecortin 1 domain. Residues 115-126 (RKPPKTSREPGR) are compositionally biased toward basic and acidic residues. Positions 130–139 (KSPSAGQAQV) are enriched in polar residues. The region spanning 160-239 (RRLTLVKNGD…NEAFRCLEME (80 aa)) is the Doublecortin 2 domain. 10 disordered regions span residues 263–301 (PNAK…SGHR), 426–445 (IWRN…RRRW), 457–593 (WRQE…TQSH), 700–750 (MPQE…TSKA), 868–920 (CFGR…TPSA), 952–997 (NTEV…GVLS), 1152–1211 (TEDF…YPEL), 1227–1255 (ATGG…STML), 1298–1350 (GSQD…RVRE), and 1567–1859 (LQSK…DLDF). The segment covering 457–472 (WRQEANHRKGHDKDNL) has biased composition (basic and acidic residues). Polar residues-rich tracts occupy residues 499-512 (GSDT…ASSH) and 535-551 (PETQ…SVSA). A compositionally biased stretch (low complexity) spans 716–728 (SPSNSPSAGNQAS). Over residues 734 to 750 (PFSSSLDLQEPQATSKA) the composition is skewed to polar residues. The segment covering 870–883 (GRESASNGSTSSGH) has biased composition (low complexity). Polar residues-rich tracts occupy residues 1241 to 1252 (TWGNAPEQSVHS), 1336 to 1345 (ESPQHFSESN), and 1567 to 1577 (LQSKKGGSSNR). Residues 1616–1632 (GEGKQRLRAEEDPEILK) show a composition bias toward basic and acidic residues. Residues 1641–1652 (PEEDEATEEDGE) show a composition bias toward acidic residues. Residues 1700-1720 (EASRERQQEVEGRHQDVKEDS) show a composition bias toward basic and acidic residues. The segment covering 1756–1778 (SHHTACSSRALSLDNSSQVSQKG) has biased composition (polar residues).

Interacts with RP1; has a synergistic effect with RP1 in photoreceptor differentiation. In terms of tissue distribution, retinal-specific; expressed in photoreceptor.

Its subcellular location is the cytoplasm. It is found in the cytoskeleton. It localises to the cilium axoneme. The protein localises to the cell projection. The protein resides in the cilium. Its subcellular location is the photoreceptor outer segment. Functionally, required for the differentiation of photoreceptor cells. Plays a role in the organization of outer segment of rod and cone photoreceptors. The protein is Retinitis pigmentosa 1-like 1 protein (Rp1l1) of Mus musculus (Mouse).